We begin with the raw amino-acid sequence, 324 residues long: CIMIP2 protein GA14893 (324 aa).

It belongs to the CIMIP2 family.

It localises to the cytoplasm. It is found in the cytoskeleton. Its subcellular location is the cilium axoneme. Probable microtubule inner protein (MIP) part of the dynein-decorated doublet microtubules (DMTs) in cilium axoneme. This is CIMIP2 protein GA14893 from Drosophila pseudoobscura pseudoobscura (Fruit fly).